The primary structure comprises 139 residues: Nucleoside diphosphate kinase (139 aa).

Residues Lys10, Phe58, Arg86, Thr92, Arg104, and Asn114 each coordinate ATP. Catalysis depends on His117, which acts as the Pros-phosphohistidine intermediate.

Belongs to the NDK family. In terms of assembly, homotetramer. Mg(2+) serves as cofactor.

It is found in the cytoplasm. It catalyses the reaction a 2'-deoxyribonucleoside 5'-diphosphate + ATP = a 2'-deoxyribonucleoside 5'-triphosphate + ADP. The catalysed reaction is a ribonucleoside 5'-diphosphate + ATP = a ribonucleoside 5'-triphosphate + ADP. Functionally, major role in the synthesis of nucleoside triphosphates other than ATP. The ATP gamma phosphate is transferred to the NDP beta phosphate via a ping-pong mechanism, using a phosphorylated active-site intermediate. This is Nucleoside diphosphate kinase from Rhodococcus opacus (strain B4).